Reading from the N-terminus, the 496-residue chain is Pup--protein ligase (496 aa).

Glutamate 30 contacts Mg(2+). Position 73 (arginine 73) interacts with ATP. Tyrosine 75 provides a ligand contact to Mg(2+). The active-site Proton acceptor is aspartate 77. Glutamate 83 is a Mg(2+) binding site. Residues threonine 86 and tryptophan 450 each coordinate ATP.

This sequence belongs to the Pup ligase/Pup deamidase family. Pup-conjugating enzyme subfamily.

It catalyses the reaction ATP + [prokaryotic ubiquitin-like protein]-L-glutamate + [protein]-L-lysine = ADP + phosphate + N(6)-([prokaryotic ubiquitin-like protein]-gamma-L-glutamyl)-[protein]-L-lysine.. It participates in protein degradation; proteasomal Pup-dependent pathway. Its pathway is protein modification; protein pupylation. Its function is as follows. Catalyzes the covalent attachment of the prokaryotic ubiquitin-like protein modifier Pup to the proteasomal substrate proteins, thereby targeting them for proteasomal degradation. This tagging system is termed pupylation. The ligation reaction involves the side-chain carboxylate of the C-terminal glutamate of Pup and the side-chain amino group of a substrate lysine. This chain is Pup--protein ligase, found in Bifidobacterium animalis subsp. lactis (strain AD011).